Consider the following 283-residue polypeptide: S-methyl-5'-thioadenosine phosphorylase (283 aa).

Threonine 18 lines the phosphate pocket. Lysine 51 bears the N6-acetyllysine mark. Phosphate is bound by residues 60-61 and 93-94; these read RH and TA. Methionine 196 provides a ligand contact to substrate. Threonine 197 serves as a coordination point for phosphate. A substrate-binding site is contributed by 220-222; that stretch reads DYD.

Belongs to the PNP/MTAP phosphorylase family. MTAP subfamily. Homotrimer. Ubiquitously expressed.

Its subcellular location is the cytoplasm. It is found in the nucleus. The catalysed reaction is S-methyl-5'-thioadenosine + phosphate = 5-(methylsulfanyl)-alpha-D-ribose 1-phosphate + adenine. It participates in amino-acid biosynthesis; L-methionine biosynthesis via salvage pathway; S-methyl-5-thio-alpha-D-ribose 1-phosphate from S-methyl-5'-thioadenosine (phosphorylase route): step 1/1. Inhibited by 5'-methylthiotubercin and 5'-chloroformycin. Catalyzes the reversible phosphorylation of S-methyl-5'-thioadenosine (MTA) to adenine and 5-methylthioribose-1-phosphate. Involved in the breakdown of MTA, a major by-product of polyamine biosynthesis. Responsible for the first step in the methionine salvage pathway after MTA has been generated from S-adenosylmethionine. Has broad substrate specificity with 6-aminopurine nucleosides as preferred substrates. This Homo sapiens (Human) protein is S-methyl-5'-thioadenosine phosphorylase.